A 463-amino-acid chain; its full sequence is Protein MRG3-like (463 aa).

Residues 54 to 74 (WVLSTGIVSFIAFNIWWVYWP) traverse the membrane as a helical segment. TPR repeat units lie at residues 84-118 (KILR…CKAE), 128-161 (TGIE…FYNE), 358-389 (ELIR…ANEN), and 409-442 (SLAH…SEMI).

The protein belongs to the MGR3 family.

The protein resides in the membrane. In Saccharomyces cerevisiae (strain ATCC 204508 / S288c) (Baker's yeast), this protein is Protein MRG3-like.